Reading from the N-terminus, the 198-residue chain is RxLR effector protein Htp1 (198 aa).

Positions 1–23 (MRIHHPLTLAALCVVLHESLGAA) are cleaved as a signal peptide. Positions 46 to 49 (RHLR) match the RxLR motif. 2 disordered regions span residues 48 to 101 (LRSD…TPMK) and 115 to 198 (TKNA…PTFD). Asn70 is a glycosylation site (N-linked (GlcNAc...) asparagine). The segment covering 70-91 (NNSQEQATTGNSVETNQVPSTE) has biased composition (polar residues). Residues 126–137 (DDDDSDFSDDDV) show a composition bias toward acidic residues. Positions 173 to 191 (APTNAPTGTDAPTDAPTDA) are enriched in low complexity.

It belongs to the RxLR effector family. As to quaternary structure, interacts with the effector Htp3 within the host cells.

It localises to the secreted. The protein localises to the host cell. Effector involved in the disease saprolegniosis in salmonids and other freshwater fish, resulting in considerable economic losses in aquaculture. Within the host fish cells, Htp1 is involved in the uptake of the S.parasitica effector Htp3 at a neutral pH (pH 7.5) and its release from vesicles into host cytosol where it degrades nucleic acids. The polypeptide is RxLR effector protein Htp1 (Saprolegnia parasitica (strain CBS 223.65)).